Consider the following 259-residue polypeptide: tRNA-cytidine(32) 2-sulfurtransferase (259 aa).

Residues 37–42 carry the PP-loop motif motif; the sequence is SGGKDS. [4Fe-4S] cluster contacts are provided by cysteine 112, cysteine 115, and cysteine 202.

The protein belongs to the TtcA family. In terms of assembly, homodimer. Requires Mg(2+) as cofactor. The cofactor is [4Fe-4S] cluster.

The protein resides in the cytoplasm. The catalysed reaction is cytidine(32) in tRNA + S-sulfanyl-L-cysteinyl-[cysteine desulfurase] + AH2 + ATP = 2-thiocytidine(32) in tRNA + L-cysteinyl-[cysteine desulfurase] + A + AMP + diphosphate + H(+). It participates in tRNA modification. Functionally, catalyzes the ATP-dependent 2-thiolation of cytidine in position 32 of tRNA, to form 2-thiocytidine (s(2)C32). The sulfur atoms are provided by the cysteine/cysteine desulfurase (IscS) system. This chain is tRNA-cytidine(32) 2-sulfurtransferase, found in Syntrophotalea carbinolica (strain DSM 2380 / NBRC 103641 / GraBd1) (Pelobacter carbinolicus).